Reading from the N-terminus, the 666-residue chain is DNA mismatch repair protein MutL (666 aa).

The protein belongs to the DNA mismatch repair MutL/HexB family.

This protein is involved in the repair of mismatches in DNA. It is required for dam-dependent methyl-directed DNA mismatch repair. May act as a 'molecular matchmaker', a protein that promotes the formation of a stable complex between two or more DNA-binding proteins in an ATP-dependent manner without itself being part of a final effector complex. The protein is DNA mismatch repair protein MutL of Clostridium botulinum (strain ATCC 19397 / Type A).